The primary structure comprises 246 residues: Triosephosphate isomerase (246 aa).

9–11 (NWK) lines the substrate pocket. The active-site Electrophile is H99. E168 functions as the Proton acceptor in the catalytic mechanism. Residues G174, S207, and 228-229 (GG) contribute to the substrate site.

It belongs to the triosephosphate isomerase family. As to quaternary structure, homodimer.

The protein localises to the cytoplasm. It catalyses the reaction D-glyceraldehyde 3-phosphate = dihydroxyacetone phosphate. Its pathway is carbohydrate biosynthesis; gluconeogenesis. The protein operates within carbohydrate degradation; glycolysis; D-glyceraldehyde 3-phosphate from glycerone phosphate: step 1/1. In terms of biological role, involved in the gluconeogenesis. Catalyzes stereospecifically the conversion of dihydroxyacetone phosphate (DHAP) to D-glyceraldehyde-3-phosphate (G3P). This chain is Triosephosphate isomerase, found in Prochlorococcus marinus (strain NATL1A).